The chain runs to 540 residues: Growth factor receptor-bound protein 14 (540 aa).

Threonine 2 carries the N-acetylthreonine modification. Residue glutamine 9 is modified to Phosphothreonine. The Ras-associating domain maps to 106–192; the sequence is KKQVIKVYSE…NKLYFRKNYA (87 aa). The PH domain occupies 234 to 342; sequence YPEIHGFLHA…WVTAIRLLKY (109 aa). Residues serine 372 and serine 375 each carry the phosphoserine modification. The SH2 domain maps to 439–535; the sequence is WFHHKISRDE…VLPCKLKHYC (97 aa).

This sequence belongs to the GRB7/10/14 family. In terms of assembly, interacts with the cytoplasmic domain of the autophosphorylated insulin receptor (INSR), through the SH2 domain. Interacts with GRB14 (via BPS domain); this interaction protects the tyrosines in the activation loop on INSR from dephosphorylation. Binds to the ankyrin repeat region of TNKS2 via its N-terminus. Interacts with activated NRAS. Interacts (via SH2 domain) with TEK/TIE2 (tyrosine phosphorylated). Phosphorylated on serine residues. Phosphorylated on tyrosine residues by TEK/TIE2. Expressed at high levels in the liver, kidney, pancreas, testis, ovary, heart and skeletal muscle.

The protein localises to the cytoplasm. It localises to the endosome membrane. Its function is as follows. Adapter protein which modulates coupling of cell surface receptor kinases with specific signaling pathways. Binds to, and suppresses signals from, the activated insulin receptor (INSR). Potent inhibitor of insulin-stimulated MAPK3 phosphorylation. Plays a critical role regulating PDPK1 membrane translocation in response to insulin stimulation and serves as an adapter protein to recruit PDPK1 to activated insulin receptor, thus promoting PKB/AKT1 phosphorylation and transduction of the insulin signal. The protein is Growth factor receptor-bound protein 14 (GRB14) of Homo sapiens (Human).